Here is a 345-residue protein sequence, read N- to C-terminus: Putative [LysW]-L-2-aminoadipate/[LysW]-L-glutamate phosphate reductase (345 aa).

11 to 14 (SGFT) is an NADP(+) binding site. The disordered stretch occupies residues 34–56 (TSRSKENKTIGHSHPNLRHSDLR). Residue Cys-146 is part of the active site. Asn-309 is a binding site for NADP(+).

This sequence belongs to the NAGSA dehydrogenase family. Type 1 subfamily. LysY sub-subfamily.

It is found in the cytoplasm. It carries out the reaction [amino-group carrier protein]-C-terminal-N-(1-carboxy-5-oxopentan-1-yl)-L-glutamine + phosphate + NADP(+) = [amino-group carrier protein]-C-terminal-N-(1-carboxy-5-phosphooxy-5-oxopentan-1-yl)-L-glutamine + NADPH + H(+). It catalyses the reaction [amino-group carrier protein]-C-terminal-gamma-(L-glutamyl-5-semialdehyde)-L-glutamate + phosphate + NADP(+) = [amino-group carrier protein]-C-terminal-gamma-(5-phospho-L-glutamyl)-L-glutamate + NADPH + H(+). It participates in amino-acid biosynthesis; L-lysine biosynthesis via AAA pathway; L-lysine from L-alpha-aminoadipate (Thermus route): step 3/5. Its pathway is amino-acid biosynthesis; L-arginine biosynthesis. Involved in both the arginine and lysine biosynthetic pathways. In Haloarcula marismortui (strain ATCC 43049 / DSM 3752 / JCM 8966 / VKM B-1809) (Halobacterium marismortui), this protein is Putative [LysW]-L-2-aminoadipate/[LysW]-L-glutamate phosphate reductase.